The primary structure comprises 172 residues: Protein-export protein SecB (172 aa).

Residues 152-172 (AQGAEGGNSGIVMPDGSQARH) are disordered.

This sequence belongs to the SecB family. Homotetramer, a dimer of dimers. One homotetramer interacts with 1 SecA dimer.

The protein resides in the cytoplasm. Its function is as follows. One of the proteins required for the normal export of preproteins out of the cell cytoplasm. It is a molecular chaperone that binds to a subset of precursor proteins, maintaining them in a translocation-competent state. It also specifically binds to its receptor SecA. The protein is Protein-export protein SecB of Cupriavidus necator (strain ATCC 17699 / DSM 428 / KCTC 22496 / NCIMB 10442 / H16 / Stanier 337) (Ralstonia eutropha).